The primary structure comprises 233 residues: DnaA regulatory inactivator Hda (233 aa).

Belongs to the DnaA family. HdA subfamily. In terms of assembly, the active form seems to be an ADP-bound monomer. Forms the RIDA complex (regulatory inactivation of DnaA) of ATP-DnaA, ADP-Hda and the DNA-loaded beta sliding clamp (dnaN).

In terms of biological role, mediates the interaction of DNA replication initiator protein DnaA with DNA polymerase subunit beta sliding clamp (dnaN). Stimulates hydrolysis of ATP-DnaA to ADP-DnaA, rendering DnaA inactive for reinitiation, a process called regulatory inhibition of DnaA or RIDA. In Escherichia fergusonii (strain ATCC 35469 / DSM 13698 / CCUG 18766 / IAM 14443 / JCM 21226 / LMG 7866 / NBRC 102419 / NCTC 12128 / CDC 0568-73), this protein is DnaA regulatory inactivator Hda.